A 383-amino-acid polypeptide reads, in one-letter code: Succinyl-diaminopimelate desuccinylase (383 aa).

His73 provides a ligand contact to Zn(2+). Residue Asp75 is part of the active site. Position 107 (Asp107) interacts with Zn(2+). Glu141 functions as the Proton acceptor in the catalytic mechanism. Residues Glu142, Glu170, and His356 each coordinate Zn(2+).

It belongs to the peptidase M20A family. DapE subfamily. In terms of assembly, homodimer. It depends on Zn(2+) as a cofactor. Co(2+) serves as cofactor.

It carries out the reaction N-succinyl-(2S,6S)-2,6-diaminopimelate + H2O = (2S,6S)-2,6-diaminopimelate + succinate. The protein operates within amino-acid biosynthesis; L-lysine biosynthesis via DAP pathway; LL-2,6-diaminopimelate from (S)-tetrahydrodipicolinate (succinylase route): step 3/3. In terms of biological role, catalyzes the hydrolysis of N-succinyl-L,L-diaminopimelic acid (SDAP), forming succinate and LL-2,6-diaminopimelate (DAP), an intermediate involved in the bacterial biosynthesis of lysine and meso-diaminopimelic acid, an essential component of bacterial cell walls. The protein is Succinyl-diaminopimelate desuccinylase of Pseudomonas aeruginosa (strain UCBPP-PA14).